A 2141-amino-acid polypeptide reads, in one-letter code: MSETSSTSVSMIHRSFEGQGPPRHLSVMHPVVAKKISFYKSGDPQFGGVKVVVNPRSFKTFDALLDNLSRKVPLPFGVRNISTPRGRHSITRLEELEDGASYLCSHRRKVQPVDLDKARRRPRPWLSSRAISAHAQRSPPTSIGAAGAPGMLRAPRRLLVFRNGDPKIRRVVIVNRRVTQSFQAFLQHLTEVMRFPVTKLYATDGRKVPSLQAVILSSGAVVAAGREPFKPGNYDIQKYLLSARLPGTSHHVYIKGNTRSESRKMSTHVPSSPRSQIYSVSSGKMHNNDCYSDHSFASENYLALEKNDSRNLLIYPSEDDIEKSIIFNQDGTMTVEMKVRFKIKEEETIKWTTVSRASLSHNNEKCEVGCFPGRTDDQSSHLKIAACSLSADVSSLEKDNNQEVSLTEEINTRITDQETETCTSVSWENGAMDTNICTRVTQDQAKHHFYRPPTPGPKRVRQKSVRGSVTLVSETEVEEEMIRQFSYSEAREDGENKSEYHMFTHSCSKMSSVSNKPLLVQINNNEQMESSLERKKESRLLKSGAIRAGVEITNQKMLEMSHNNGSPQTISENSIVGEVIVDSLTSDNKTNIKILRPYSRTRDRFSPILADTTHSLSNDSGIDKTVSEIPALVESSTVTTRIDRLINEFAQCDLTNSANEKQTSLSVASKKKMKSQQQVINSRHQIRKIATKGILSKNKRINTGRRIAQEIILEGSDGSLKGGVVCEEDLHVSDTVIESNYCSQSDLNPVNSKNFHVNKLNTLQNPKKFQGLLAKRKSRPLTKVSLGGPTKREIGQGDKVFPHNDFRYCKNNFEDQNLFPMFNFLEQRPSDFCGPQGQAEIASWYLGGITKKNLVSKVNNSHITLKTQKKQKGDKLKSSTTVSKQQVTTRANSLGSLKKAVFPEAISHHSVQNYIQRWLQNTNPHSALQSRKSAPIYKKDRSVVSCNNNGFAGTKSHTSSGEGNNFARESNKYITKNASLTENLGKKVGKFFDKVNSEELSKDLCENQVESLNDACLLPLHENCALSQSAIDDHNTKIQVCAEKLGPEISLVYQEINVATKRHSVEAAIQVDLTEEDTSKDPLPILLLRQLQALVPSIHKTQNGITQMPGSLADIPFSSPICKSYTNVLLAWLLVLTLKGSINSFCQGDAHKTTNRASEILGLLEVLRHTAITEEADDLKAAVANLVESTTNHFGLTEKEQDMVPVGLSANCSTPNLHRVPKCVENEKTQKISSGGGHSASEHCGPEACVSELTCSCQMCIVNKTCPPKETCNLSDIFCPSDGCTVDQTPMNKACFQGEVCSLTDALSSHRACAHEENHSRKATCPIDEAYIPNKICNTSDFLIFKENTCTDNLELTEELERINKVQKDLNVLADPGCKHSFNILVSDQNISNLSYSSFPINETEPEFDKERSSVAELKNYSLKTFQGKNAYTSSDKEDSKTSEEPGSITNSMTSSERNISELESFEELENQDTDTFHMKVNAREQAAEELIQKELEASKNLQLIDGSRRNITEEEERNGIICEAIRRRLATPPSLVFCYDSKQNTEKDLNEGETKMRVKMMVKSVEIGSYSESSLDFKNDFIGPVTSDWSEFRPSSENEQPYKTSSDGPNGSCEEIVQDKDYNKGFVKRTIEKLYSKGEIIKPSFFSGSIHRSQVCPYNSVEFQCARKVDLYDCEGQSFGSSEQLSSNSSMLQKFLEEGQDKCDFNDVRANYHGGDILGHGTKQNDHNRIIRDIEEGVLIDKGKWLLKENHLLRISSPENSGLYGNADTISVDTLLNNDNEVPYSHFGNLAPDPTMAELSSSELEELSQPLELKCSYFNMPHCSDSEPFCEDLLDVQNKTCARERIPVHHAEEKANHKSERVCTSVTHGFTSAGNKVHPVSDDTIKNQPLPVNNAIHGALQEGDSLDKLYAICGQHCPILTVIIQPINEEDRGFAYCKNSDIENFLGLHLWMKVHPYLLPSNKTIFRDANNKANGRKAFIDNAFDDTFDLMDKRKLRNLKGISSLGLEEENNLKKFQLYLKKKFCVNFLHTSLLIVDNRNSDTRDSINQTNEIFEVVDENNNFLNSRFQNSRTNLNQVVRECSDFFFEMHGQTCLFYQVETSLNISNRNTVEIFYVFEDENLFIWEEESQFDLESNDEDL.

A compositionally biased stretch (polar residues) spans 1–10 (MSETSSTSVS). The interval 1-20 (MSETSSTSVSMIHRSFEGQG) is disordered. Positions 34-116 (KKISFYKSGD…RRKVQPVDLD (83 aa)) constitute a Doublecortin 1 domain. Positions 126 to 149 (LSSRAISAHAQRSPPTSIGAAGAP) are disordered. The 80-residue stretch at 156–235 (RRLLVFRNGD…REPFKPGNYD (80 aa)) folds into the Doublecortin 2 domain. 3 disordered regions span residues 259–278 (RSESRKMSTHVPSSPRSQIY), 1432–1458 (YTSSDKEDSKTSEEPGSITNSMTSSER), and 1589–1612 (DWSEFRPSSENEQPYKTSSDGPNG). Polar residues predominate over residues 268 to 278 (HVPSSPRSQIY). The segment covering 1435-1444 (SDKEDSKTSE) has biased composition (basic and acidic residues). Composition is skewed to polar residues over residues 1448 to 1458 (SITNSMTSSER) and 1598 to 1610 (ENEQPYKTSSDGP).

As to quaternary structure, interacts (via the doublecortin domains) with microtubules. Interacts with RP1L1. Interacts with MAK.

The protein localises to the cytoplasm. It is found in the cytoskeleton. Its subcellular location is the cilium axoneme. It localises to the cell projection. The protein resides in the cilium. The protein localises to the photoreceptor outer segment. Its function is as follows. Microtubule-associated protein regulating the stability and length of the microtubule-based axoneme of photoreceptors. Required for the differentiation of photoreceptor cells, it plays a role in the organization of the outer segment of rod and cone photoreceptors ensuring the correct orientation and higher-order stacking of outer segment disks along the photoreceptor axoneme. This chain is Oxygen-regulated protein 1 (RP1), found in Canis lupus familiaris (Dog).